Here is a 971-residue protein sequence, read N- to C-terminus: Nuclear factor NF-kappa-B p105 subunit (971 aa).

The region spanning 40-365 (PYLQILEQPK…EVQRKRQKLM (326 aa)) is the RHD domain. Cys-59 is subject to S-nitrosocysteine; alternate. The S-(15-deoxy-Delta12,14-prostaglandin J2-9-yl)cysteine; alternate moiety is linked to residue Cys-59. Lys-323 is covalently cross-linked (Glycyl lysine isopeptide (Lys-Gly) (interchain with G-Cter in SUMO2)). Position 335 is a phosphoserine; by PKA (Ser-335). The short motif at 358 to 363 (QRKRQK) is the Nuclear localization signal element. The interval 370–392 (DSFGGGSGAGAGGGGMFGSGGGG) is GRR. The interval 433 to 971 (INTKFKNGPK…GQEGPIEGKI (539 aa)) is interaction with CFLAR. N6-acetyllysine; by EP300 is present on Lys-438. The tract at residues 439 to 470 (NGPKDCAKSDDEESLTLPEKETEGEGPSLPMA) is disordered. Ser-447 carries the phosphoserine modification. ANK repeat units follow at residues 538–567 (NGDSVLHLAIIHLHAQLVRDLLEVTSGLIS), 577–606 (LYQTPLHLAVITKQEDVVEDLLRVGADLSL), 610–639 (WGNSVLHLAAKEGHDRILSILLKSRKAAPL), 646–675 (EGLNAIHIAVMSNSLPCLLLLVAAGAEVNA), 680–710 (SGRTALHLAVEYDNISLAGCLLLEGDAHVDS), and 714–743 (DGTTPLHIAAGRGSTRLAALLKAAGADPLV). The interval 646–680 (EGLNAIHIAVMSNSLPCLLLLVAAGAEVNAQEQKS) is essential for interaction with HIF1AN. (3S)-3-hydroxyasparagine; by HIF1AN is present on Asn-674. Ser-755 is modified (phosphoserine). The stretch at 767–797 (PGTTPLDMAANWQVFDILNGKPYEPVFTSDD) is one ANK 7 repeat. Positions 801-888 (QGDMKQLTED…EAIEVIQAAF (88 aa)) constitute a Death domain. Ser-896 is modified (phosphoserine). At Ser-910 the chain carries Phosphoserine; by GSK3-beta; in vitro. The residue at position 926 (Ser-926) is a Phosphoserine. Phosphoserine; by IKKB occurs at positions 930 and 935. Ser-940 is modified (phosphoserine). Thr-946 is subject to Phosphothreonine.

Component of the NF-kappa-B p65-p50 complex. Homodimer; component of the NF-kappa-B p50-p50 complex. Component of the NF-kappa-B p105-p50 complex. Component of the NF-kappa-B p50-c-Rel complex. Component of a complex consisting of the NF-kappa-B p50-p50 homodimer and BCL3. Also interacts with MAP3K8. NF-kappa-B p50 subunit interacts with NCOA3 coactivator, which may coactivate NF-kappa-B dependent expression via its histone acetyltransferase activity. Interacts with TSC22D3; this interaction prevents nuclear translocation and DNA-binding. Interacts with SPAG9 and UNC5CL. NFKB1/p105 interacts with CFLAR; the interaction inhibits p105 processing into p50. NFKB1/p105 forms a ternary complex with MAP3K8 and TNIP2. Interacts with GSK3B; the interaction prevents processing of p105 to p50. NFKB1/p50 interacts with NFKBIE. NFKB1/p50 interacts with NFKBIZ. Nuclear factor NF-kappa-B p50 subunit interacts with NFKBID. Directly interacts with MEN1. Interacts with HIF1AN. Interacts with FEM1AA; interaction is direct. Post-translationally, generation of the NF-kappa-B p50 (Nuclear factor NF-kappa-B p50 subunit) transcription factor takes place both cotranslationally and post-translationally via non-mutually exclusive mechanisms. A cotranslational processing allows the production of both p50 and p105 (Nuclear factor NF-kappa-B p105 subunit) from a single NFKB1 mRNA. While translation occurs, the particular unfolded structure after the GRR repeat region acts as a substrate for the proteasome, promoting degradation of the C-terminus. The GRR acts as a proteasomal 'stop signal', protecting the region upstream of the GRR from degradation and promoting generation of p50. It is unclear if limited proteasome degradation during cotranslational processing depends on ubiquitination. NF-kappa-B p50 is also generated post-translationally following ubiquitination by the KPC complex, leading to limited processing by the proteasome downstream of the GRR region, thereby generating p50. In terms of processing, phosphorylation at the C-terminus by IKBKB/IKKB acts as a signal for ubiquitination and promotes either complete degradation or processing to generate the NF-kappa-B p50 (Nuclear factor NF-kappa-B p50 subunit). Phosphorylation at Ser-910 primes p105 for proteolytic processing in response to TNF-alpha stimulation. Phosphorylation at Ser-926, Ser-930 and Ser-935 are required for BTRC/BTRCP-mediated ubiquitination and proteolysis. Phosphorylation at Ser-930 is also required for ubiquitination by the KPC complex and limited processing to generate NF-kappa-B p50 (Nuclear factor NF-kappa-B p50 subunit). Polyubiquitinated at multiple Lys residues in the C-terminus. Polyubiquitinated by the SCF(FBXW11) and SCF(BTRC) complexes following phosphorylation at Ser-926, Ser-930 and Ser-935, leading to its complete degradation. In contrast, polyubiquitination by the KPC complex following phosphorylation at Ser-930 leads to limited proteosomal processing and generation of the active NF-kappa-B p50 (Nuclear factor NF-kappa-B p50 subunit). Post-translationally, S-nitrosylation of Cys-59 affects DNA binding. In terms of processing, the covalent modification of cysteine by 15-deoxy-Delta12,14-prostaglandin-J2 is autocatalytic and reversible. It may occur as an alternative to other cysteine modifications, such as S-nitrosylation and S-palmitoylation.

The protein localises to the cytoplasm. Its subcellular location is the nucleus. In terms of biological role, NF-kappa-B is a pleiotropic transcription factor present in almost all cell types and is the endpoint of a series of signal transduction events that are initiated by a vast array of stimuli related to many biological processes such as inflammation, immunity, differentiation, cell growth, tumorigenesis and apoptosis. NF-kappa-B is a homo- or heterodimeric complex formed by the Rel-like domain-containing proteins RELA/p65, RELB, NFKB1/p105, NFKB1/p50, REL and NFKB2/p52 and the heterodimeric p65-p50 complex appears to be most abundant one. The dimers bind at kappa-B sites in the DNA of their target genes and the individual dimers have distinct preferences for different kappa-B sites that they can bind with distinguishable affinity and specificity. Different dimer combinations act as transcriptional activators or repressors, respectively. NF-kappa-B is controlled by various mechanisms of post-translational modification and subcellular compartmentalization as well as by interactions with other cofactors or corepressors. NF-kappa-B complexes are held in the cytoplasm in an inactive state complexed with members of the NF-kappa-B inhibitor (I-kappa-B) family. In a conventional activation pathway, I-kappa-B is phosphorylated by I-kappa-B kinases (IKKs) in response to different activators, subsequently degraded thus liberating the active NF-kappa-B complex which translocates to the nucleus. NF-kappa-B heterodimeric p65-p50 and RelB-p50 complexes are transcriptional activators. The NF-kappa-B p50-p50 homodimer is a transcriptional repressor, but can act as a transcriptional activator when associated with BCL3. NFKB1 appears to have dual functions such as cytoplasmic retention of attached NF-kappa-B proteins by p105 and generation of p50 by a cotranslational processing. The proteasome-mediated process ensures the production of both p50 and p105 and preserves their independent function, although processing of NFKB1/p105 also appears to occur post-translationally. p50 binds to the kappa-B consensus sequence 5'-GGRNNYYCC-3', located in the enhancer region of genes involved in immune response and acute phase reactions. Plays a role in the regulation of apoptosis. In a complex with MAP3K8, NFKB1/p105 represses MAP3K8-induced MAPK signaling; active MAP3K8 is released by proteasome-dependent degradation of NFKB1/p105. Functionally, P105 is the precursor of the active p50 subunit (Nuclear factor NF-kappa-B p50 subunit) of the nuclear factor NF-kappa-B. Acts as a cytoplasmic retention of attached NF-kappa-B proteins by p105. Constitutes the active form, which associates with RELA/p65 to form the NF-kappa-B p65-p50 complex to form a transcription factor. Together with RELA/p65, binds to the kappa-B consensus sequence 5'-GGRNNYYCC-3', located in the enhancer region of genes involved in immune response and acute phase reactions. Its function is as follows. Isoform 3 (p98) (but not p84 or p105) acts as a transactivator of NF-kappa-B-regulated gene expression. In terms of biological role, acts as an inhibitor of transactivation of p50 NF-kappa-B subunit, probably by sequestering it in the cytoplasm. This chain is Nuclear factor NF-kappa-B p105 subunit (Nfkb1), found in Mus musculus (Mouse).